The following is a 220-amino-acid chain: Adenylate kinase (220 aa).

ATP is bound at residue 10–15 (GAGKGT). Positions 30–59 (STGDMLRAAVKAGTPLGVEAKGYMDAGKLV) are NMP. AMP-binding positions include Thr31, Arg36, 57–59 (KLV), 85–88 (GFPR), and Gln92. Residues 122–159 (GRRTHPASGRTYHVKFNPPKVEGHDDVTGEPLIQRDDD) are LID. ATP is bound by residues Arg123 and 132-133 (TY). Residues Arg156 and Arg167 each coordinate AMP. ATP is bound at residue Gly206.

It belongs to the adenylate kinase family. As to quaternary structure, monomer.

The protein resides in the cytoplasm. It carries out the reaction AMP + ATP = 2 ADP. It functions in the pathway purine metabolism; AMP biosynthesis via salvage pathway; AMP from ADP: step 1/1. Functionally, catalyzes the reversible transfer of the terminal phosphate group between ATP and AMP. Plays an important role in cellular energy homeostasis and in adenine nucleotide metabolism. The sequence is that of Adenylate kinase from Burkholderia cenocepacia (strain HI2424).